The chain runs to 170 residues: Shikimate kinase (170 aa).

11–16 (LSGKST) is a binding site for ATP. Ser-15 contacts Mg(2+). Residues Asp-33, Arg-57, and Gly-79 each coordinate substrate. Residue Arg-119 participates in ATP binding. A substrate-binding site is contributed by Arg-137.

Belongs to the shikimate kinase family. Monomer. Mg(2+) is required as a cofactor.

Its subcellular location is the cytoplasm. The catalysed reaction is shikimate + ATP = 3-phosphoshikimate + ADP + H(+). It participates in metabolic intermediate biosynthesis; chorismate biosynthesis; chorismate from D-erythrose 4-phosphate and phosphoenolpyruvate: step 5/7. Its function is as follows. Catalyzes the specific phosphorylation of the 3-hydroxyl group of shikimic acid using ATP as a cosubstrate. The sequence is that of Shikimate kinase from Clostridium botulinum (strain 657 / Type Ba4).